Consider the following 105-residue polypeptide: Vacuolar ATPase assembly integral membrane protein VMA21 homolog (105 aa).

The interval 1 to 26 (MSTKNKKAAGGNGGAPKQTRQQSHDS) is disordered. The Cytoplasmic segment spans residues 1 to 36 (MSTKNKKAAGGNGGAPKQTRQQSHDSQDYSSFKTVL). Residues 37–57 (FYCMLIVFLPVLTFFVLKGFV) form a helical membrane-spanning segment. The Lumenal portion of the chain corresponds to 58–68 (LDQFLDISEVK). The chain crosses the membrane as a helical span at residues 69–89 (VNIASAVGAVVALHIALGLYI). The Cytoplasmic segment spans residues 90–105 (YRAYFGTTGSKASKTD).

This sequence belongs to the VMA21 family.

It localises to the endoplasmic reticulum membrane. It is found in the endoplasmic reticulum-Golgi intermediate compartment membrane. Its subcellular location is the cytoplasmic vesicle. The protein resides in the COPII-coated vesicle membrane. Required for the assembly of the V0 complex of the vacuolar ATPase (V-ATPase) in the endoplasmic reticulum. This is Vacuolar ATPase assembly integral membrane protein VMA21 homolog from Drosophila erecta (Fruit fly).